The following is a 398-amino-acid chain: 1-deoxy-D-xylulose 5-phosphate reductoisomerase (398 aa).

NADPH-binding residues include T11, G12, S13, I14, and N125. K126 provides a ligand contact to 1-deoxy-D-xylulose 5-phosphate. E127 lines the NADPH pocket. D151 is a binding site for Mn(2+). The 1-deoxy-D-xylulose 5-phosphate site is built by S152, E153, S186, and H209. E153 is a binding site for Mn(2+). G215 contacts NADPH. 1-deoxy-D-xylulose 5-phosphate contacts are provided by S222, N227, K228, and E231. Residue E231 participates in Mn(2+) binding.

It belongs to the DXR family. It depends on Mg(2+) as a cofactor. The cofactor is Mn(2+).

It catalyses the reaction 2-C-methyl-D-erythritol 4-phosphate + NADP(+) = 1-deoxy-D-xylulose 5-phosphate + NADPH + H(+). Its pathway is isoprenoid biosynthesis; isopentenyl diphosphate biosynthesis via DXP pathway; isopentenyl diphosphate from 1-deoxy-D-xylulose 5-phosphate: step 1/6. Catalyzes the NADPH-dependent rearrangement and reduction of 1-deoxy-D-xylulose-5-phosphate (DXP) to 2-C-methyl-D-erythritol 4-phosphate (MEP). This Acinetobacter baumannii (strain ATCC 17978 / DSM 105126 / CIP 53.77 / LMG 1025 / NCDC KC755 / 5377) protein is 1-deoxy-D-xylulose 5-phosphate reductoisomerase.